We begin with the raw amino-acid sequence, 364 residues long: Putative methylthioribose-1-phosphate isomerase (364 aa).

Residues 57 to 59, R100, and Q206 contribute to the substrate site; that span reads RGA. D247 serves as the catalytic Proton donor. 257–258 is a binding site for substrate; sequence NK.

It belongs to the eIF-2B alpha/beta/delta subunits family. MtnA subfamily.

The enzyme catalyses 5-(methylsulfanyl)-alpha-D-ribose 1-phosphate = 5-(methylsulfanyl)-D-ribulose 1-phosphate. In terms of biological role, catalyzes the interconversion of methylthioribose-1-phosphate (MTR-1-P) into methylthioribulose-1-phosphate (MTRu-1-P). In Pyrococcus horikoshii (strain ATCC 700860 / DSM 12428 / JCM 9974 / NBRC 100139 / OT-3), this protein is Putative methylthioribose-1-phosphate isomerase.